We begin with the raw amino-acid sequence, 223 residues long: Phosphoribosylformylglycinamidine synthase subunit PurQ (223 aa).

A Glutamine amidotransferase type-1 domain is found at 3 to 223 (SAVVQLPGLN…FASALDVIAA (221 aa)). Cys-86 serves as the catalytic Nucleophile. Catalysis depends on residues His-196 and Glu-198.

As to quaternary structure, part of the FGAM synthase complex composed of 1 PurL, 1 PurQ and 2 PurS subunits.

Its subcellular location is the cytoplasm. It catalyses the reaction N(2)-formyl-N(1)-(5-phospho-beta-D-ribosyl)glycinamide + L-glutamine + ATP + H2O = 2-formamido-N(1)-(5-O-phospho-beta-D-ribosyl)acetamidine + L-glutamate + ADP + phosphate + H(+). The enzyme catalyses L-glutamine + H2O = L-glutamate + NH4(+). The protein operates within purine metabolism; IMP biosynthesis via de novo pathway; 5-amino-1-(5-phospho-D-ribosyl)imidazole from N(2)-formyl-N(1)-(5-phospho-D-ribosyl)glycinamide: step 1/2. Part of the phosphoribosylformylglycinamidine synthase complex involved in the purines biosynthetic pathway. Catalyzes the ATP-dependent conversion of formylglycinamide ribonucleotide (FGAR) and glutamine to yield formylglycinamidine ribonucleotide (FGAM) and glutamate. The FGAM synthase complex is composed of three subunits. PurQ produces an ammonia molecule by converting glutamine to glutamate. PurL transfers the ammonia molecule to FGAR to form FGAM in an ATP-dependent manner. PurS interacts with PurQ and PurL and is thought to assist in the transfer of the ammonia molecule from PurQ to PurL. The protein is Phosphoribosylformylglycinamidine synthase subunit PurQ of Rhizobium johnstonii (strain DSM 114642 / LMG 32736 / 3841) (Rhizobium leguminosarum bv. viciae).